A 310-amino-acid polypeptide reads, in one-letter code: Apolipoprotein E (310 aa).

Residues methionine 1–alanine 18 form the signal peptide. 8 tandem repeats follow at residues alanine 77–glycine 98, proline 99–glycine 120, alanine 121–glycine 142, glutamine 143–leucine 164, arginine 165–glutamate 186, arginine 187–threonine 208, leucine 209–arginine 226, and glycine 227–glutamine 248. Residues alanine 77 to glutamine 248 are 8 X 22 AA approximate tandem repeats. Residues histidine 155–arginine 165 form an LDL and other lipoprotein receptors binding region. Residue methionine 159–arginine 162 coordinates heparin. The interval histidine 207–methionine 283 is lipid-binding and lipoprotein association. Heparin is bound at residue alanine 222–leucine 229. The homooligomerization stretch occupies residues asparagine 259–glutamine 310. The specificity for association with VLDL stretch occupies residues arginine 271–methionine 283.

The protein belongs to the apolipoprotein A1/A4/E family. As to quaternary structure, homotetramer. May interact with ABCA1; functionally associated with ABCA1 in the biogenesis of HDLs. May interact with APP/A4 amyloid-beta peptide; the interaction is extremely stable in vitro but its physiological significance is unclear. May interact with MAPT. May interact with MAP2. In the cerebrospinal fluid, interacts with secreted SORL1. Interacts with PMEL; this allows the loading of PMEL luminal fragment on ILVs to induce fibril nucleation. Post-translationally, APOE exists as multiple glycosylated and sialylated glycoforms within cells and in plasma. The extent of glycosylation and sialylation are tissue and context specific. Glycated in plasma VLDL. In terms of processing, phosphorylated by FAM20C in the extracellular medium.

The protein resides in the secreted. Its subcellular location is the extracellular space. It localises to the extracellular matrix. The protein localises to the extracellular vesicle. It is found in the endosome. The protein resides in the multivesicular body. In terms of biological role, APOE is an apolipoprotein, a protein associating with lipid particles, that mainly functions in lipoprotein-mediated lipid transport between organs via the plasma and interstitial fluids. APOE is a core component of plasma lipoproteins and is involved in their production, conversion and clearance. Apolipoproteins are amphipathic molecules that interact both with lipids of the lipoprotein particle core and the aqueous environment of the plasma. As such, APOE associates with chylomicrons, chylomicron remnants, very low density lipoproteins (VLDL) and intermediate density lipoproteins (IDL) but shows a preferential binding to high-density lipoproteins (HDL). It also binds a wide range of cellular receptors including the LDL receptor/LDLR and the very low-density lipoprotein receptor/VLDLR that mediate the cellular uptake of the APOE-containing lipoprotein particles. Finally, APOE also has a heparin-binding activity and binds heparan-sulfate proteoglycans on the surface of cells, a property that supports the capture and the receptor-mediated uptake of APOE-containing lipoproteins by cells. The polypeptide is Apolipoprotein E (APOE) (Ceratotherium simum cottoni (Northern white rhinoceros)).